A 170-amino-acid polypeptide reads, in one-letter code: Translationally-controlled tumor protein homolog (170 aa).

A TCTP domain is found at 1-170 (MLIYNDILNG…WKHGLKETKV (170 aa)).

The protein belongs to the TCTP family.

Its subcellular location is the cytoplasm. The protein resides in the cytoskeleton. Involved in protein synthesis. Involved in microtubule stabilization. The protein is Translationally-controlled tumor protein homolog of Gibberella zeae (strain ATCC MYA-4620 / CBS 123657 / FGSC 9075 / NRRL 31084 / PH-1) (Wheat head blight fungus).